The following is a 78-amino-acid chain: MSTIEERVKKIVAEQLGVKEEEVVNTASFVEDLGADSLDTVELVMALEEEFETEIPDEEAEKITTVQAAIDYVTSHQA.

A Carrier domain is found at 2-77 (STIEERVKKI…AAIDYVTSHQ (76 aa)). The residue at position 37 (S37) is an O-(pantetheine 4'-phosphoryl)serine.

Belongs to the acyl carrier protein (ACP) family. In terms of processing, 4'-phosphopantetheine is transferred from CoA to a specific serine of apo-ACP by AcpS. This modification is essential for activity because fatty acids are bound in thioester linkage to the sulfhydryl of the prosthetic group.

It is found in the cytoplasm. It functions in the pathway lipid metabolism; fatty acid biosynthesis. Its function is as follows. Carrier of the growing fatty acid chain in fatty acid biosynthesis. This is Acyl carrier protein from Pseudomonas fluorescens (strain SBW25).